Consider the following 671-residue polypeptide: DNA ligase (671 aa).

NAD(+) is bound by residues 32 to 36, 81 to 82, and E113; these read DAEYD and SL. The active-site N6-AMP-lysine intermediate is K115. Residues R136, E173, K290, and K314 each coordinate NAD(+). Zn(2+)-binding residues include C408, C411, C426, and C432. Residues 593-671 enclose the BRCT domain; the sequence is EIDSPFAGKT…ETEMLRLLGS (79 aa).

Belongs to the NAD-dependent DNA ligase family. LigA subfamily. Requires Mg(2+) as cofactor. Mn(2+) serves as cofactor.

The catalysed reaction is NAD(+) + (deoxyribonucleotide)n-3'-hydroxyl + 5'-phospho-(deoxyribonucleotide)m = (deoxyribonucleotide)n+m + AMP + beta-nicotinamide D-nucleotide.. Functionally, DNA ligase that catalyzes the formation of phosphodiester linkages between 5'-phosphoryl and 3'-hydroxyl groups in double-stranded DNA using NAD as a coenzyme and as the energy source for the reaction. It is essential for DNA replication and repair of damaged DNA. The chain is DNA ligase from Escherichia fergusonii (strain ATCC 35469 / DSM 13698 / CCUG 18766 / IAM 14443 / JCM 21226 / LMG 7866 / NBRC 102419 / NCTC 12128 / CDC 0568-73).